The chain runs to 423 residues: Dihydroorotase (423 aa).

The Zn(2+) site is built by His56 and His58. Substrate contacts are provided by residues 58-60 and Asn89; that span reads HFR. The Zn(2+) site is built by Lys137, His168, His227, and Asp302. Lys137 carries the N6-carboxylysine modification. Residue Asp302 is part of the active site. Substrate is bound at residue His306.

This sequence belongs to the metallo-dependent hydrolases superfamily. DHOase family. Class I DHOase subfamily. It depends on Zn(2+) as a cofactor.

The catalysed reaction is (S)-dihydroorotate + H2O = N-carbamoyl-L-aspartate + H(+). Its pathway is pyrimidine metabolism; UMP biosynthesis via de novo pathway; (S)-dihydroorotate from bicarbonate: step 3/3. Its function is as follows. Catalyzes the reversible cyclization of carbamoyl aspartate to dihydroorotate. This is Dihydroorotase from Methanocaldococcus jannaschii (strain ATCC 43067 / DSM 2661 / JAL-1 / JCM 10045 / NBRC 100440) (Methanococcus jannaschii).